The chain runs to 276 residues: Energy-coupling factor transporter ATP-binding protein EcfA1 (276 aa).

The ABC transporter domain occupies 2 to 237 (IEIKNLKFKY…GSELVDLGLD (236 aa)). 37-44 (GHNGSGKS) contacts ATP.

The protein belongs to the ABC transporter superfamily. Energy-coupling factor EcfA family. Forms a stable energy-coupling factor (ECF) transporter complex composed of 2 membrane-embedded substrate-binding proteins (S component), 2 ATP-binding proteins (A component) and 2 transmembrane proteins (T component).

It localises to the cell membrane. ATP-binding (A) component of a common energy-coupling factor (ECF) ABC-transporter complex. Unlike classic ABC transporters this ECF transporter provides the energy necessary to transport a number of different substrates. This chain is Energy-coupling factor transporter ATP-binding protein EcfA1, found in Streptococcus thermophilus (strain CNRZ 1066).